A 160-amino-acid polypeptide reads, in one-letter code: Large ribosomal subunit protein uL10 (160 aa).

This sequence belongs to the universal ribosomal protein uL10 family. As to quaternary structure, part of the ribosomal stalk of the 50S ribosomal subunit. The N-terminus interacts with L11 and the large rRNA to form the base of the stalk. The C-terminus forms an elongated spine to which L12 dimers bind in a sequential fashion forming a multimeric L10(L12)X complex.

Its function is as follows. Forms part of the ribosomal stalk, playing a central role in the interaction of the ribosome with GTP-bound translation factors. This Ehrlichia canis (strain Jake) protein is Large ribosomal subunit protein uL10.